The chain runs to 348 residues: Selenide, water dikinase (348 aa).

U17 is a catalytic residue. U17 is a non-standard amino acid (selenocysteine). ATP-binding positions include K20 and 48-50 (TAD). A Mg(2+)-binding site is contributed by D51. Residues D68, D91, and 138-140 (GHT) contribute to the ATP site. D91 lines the Mg(2+) pocket. D226 lines the Mg(2+) pocket.

It belongs to the selenophosphate synthase 1 family. Class I subfamily. As to quaternary structure, homodimer. Requires Mg(2+) as cofactor.

It catalyses the reaction hydrogenselenide + ATP + H2O = selenophosphate + AMP + phosphate + 2 H(+). Synthesizes selenophosphate from selenide and ATP. In Clostridioides difficile (strain 630) (Peptoclostridium difficile), this protein is Selenide, water dikinase.